A 428-amino-acid polypeptide reads, in one-letter code: MKKTLLAVAIGGAMFATSAAAVDFHGYARSGIGWTSGGGEQTALKVNGGGSKYRLGNETETYAEFKLGQELFKDGNKSIYLDSNIAYSIDQQVDWEATDPAFREINVQFKNFAEDLLPGATLWAGKRFYQRHDVHMNDFYYWDISGPGAGVENIDLGFGKLSLAVTRNTEGGGTATYGQDKVYYIDNNGQIQYRYEDRKADVYNDVFDIRLAELNVNPNGKLEIGFDYGNAHTKNGYHLEPGASKNGYMITLEHTQGEFFGGFNKFVAQYATDSMTSWNTGHSQGGSVNNNGDMLRLIDHGVVQFSPKVEMMYALIYEKTDLDNNQGKTWYSAGIRPMYKWNKTMSTLLEVGYDRIKEQSSGKKNDLAKVTLAQQWQAGDSIWARPAIRVFGTYGHWNDKFNITDRTNAGYKAKDAEFVAGVQFEAWW.

Residues 1–21 form the signal peptide; the sequence is MKKTLLAVAIGGAMFATSAAA.

This sequence belongs to the porin LamB (TC 1.B.3) family. Homotrimer formed of three 18-stranded antiparallel beta-barrels, containing three independent channels.

The protein resides in the cell outer membrane. It catalyses the reaction beta-maltose(in) = beta-maltose(out). In terms of biological role, involved in the transport of maltose and maltodextrins. This is Maltoporin from Mannheimia succiniciproducens (strain KCTC 0769BP / MBEL55E).